A 251-amino-acid chain; its full sequence is Triosephosphate isomerase (251 aa).

Residue 9-11 (NWK) participates in substrate binding. The Electrophile role is filled by H95. The Proton acceptor role is filled by E167. Substrate contacts are provided by residues G173, S213, and 234 to 235 (GG). Phosphoserine is present on S213.

This sequence belongs to the triosephosphate isomerase family. As to quaternary structure, homodimer.

Its subcellular location is the cytoplasm. The catalysed reaction is D-glyceraldehyde 3-phosphate = dihydroxyacetone phosphate. The protein operates within carbohydrate biosynthesis; gluconeogenesis. It functions in the pathway carbohydrate degradation; glycolysis; D-glyceraldehyde 3-phosphate from glycerone phosphate: step 1/1. Involved in the gluconeogenesis. Catalyzes stereospecifically the conversion of dihydroxyacetone phosphate (DHAP) to D-glyceraldehyde-3-phosphate (G3P). The chain is Triosephosphate isomerase from Bacillus cytotoxicus (strain DSM 22905 / CIP 110041 / 391-98 / NVH 391-98).